The primary structure comprises 194 residues: Putative NAD(P)H nitroreductase YfhC (194 aa).

FMN contacts are provided by residues 20 to 22 (RRS), 147 to 148 (KI), and Arg-188.

It belongs to the nitroreductase family. FMN serves as cofactor.

In Bacillus subtilis (strain 168), this protein is Putative NAD(P)H nitroreductase YfhC (yfhC).